Consider the following 201-residue polypeptide: 3-isopropylmalate dehydratase small subunit (201 aa).

The protein belongs to the LeuD family. LeuD type 1 subfamily. Heterodimer of LeuC and LeuD.

The enzyme catalyses (2R,3S)-3-isopropylmalate = (2S)-2-isopropylmalate. It participates in amino-acid biosynthesis; L-leucine biosynthesis; L-leucine from 3-methyl-2-oxobutanoate: step 2/4. Catalyzes the isomerization between 2-isopropylmalate and 3-isopropylmalate, via the formation of 2-isopropylmaleate. This chain is 3-isopropylmalate dehydratase small subunit, found in Nitrobacter winogradskyi (strain ATCC 25391 / DSM 10237 / CIP 104748 / NCIMB 11846 / Nb-255).